Reading from the N-terminus, the 327-residue chain is Probable cell division protein WhiA (327 aa).

The segment at residues 277-310 is a DNA-binding region (H-T-H motif); that stretch reads EELGRLADPPMTKDAVAGRIRRLLSMADRKAKQD. The interval 304 to 327 is disordered; the sequence is DRKAKQDGIPDTESAVTPDLLEDA.

It belongs to the WhiA family.

Functionally, involved in cell division and chromosome segregation. The polypeptide is Probable cell division protein WhiA (Mycolicibacterium vanbaalenii (strain DSM 7251 / JCM 13017 / BCRC 16820 / KCTC 9966 / NRRL B-24157 / PYR-1) (Mycobacterium vanbaalenii)).